An 856-amino-acid polypeptide reads, in one-letter code: DNA mismatch repair protein MutS (856 aa).

615-622 (GPNMGGKS) contacts ATP. Residues 798-807 (ETTGHQQAIK) are compositionally biased toward polar residues. A disordered region spans residues 798–817 (ETTGHQQAIKNPSKAPREEQ).

This sequence belongs to the DNA mismatch repair MutS family.

Functionally, this protein is involved in the repair of mismatches in DNA. It is possible that it carries out the mismatch recognition step. This protein has a weak ATPase activity. In Photobacterium profundum (strain SS9), this protein is DNA mismatch repair protein MutS.